A 124-amino-acid polypeptide reads, in one-letter code: Small ribosomal subunit protein uS13 (124 aa).

The tract at residues 95 to 124 (GLPVRGQRTKTNARTRKGPKRTIAGKKKAK) is disordered.

Belongs to the universal ribosomal protein uS13 family. As to quaternary structure, part of the 30S ribosomal subunit. Forms a loose heterodimer with protein S19. Forms two bridges to the 50S subunit in the 70S ribosome.

In terms of biological role, located at the top of the head of the 30S subunit, it contacts several helices of the 16S rRNA. In the 70S ribosome it contacts the 23S rRNA (bridge B1a) and protein L5 of the 50S subunit (bridge B1b), connecting the 2 subunits; these bridges are implicated in subunit movement. Contacts the tRNAs in the A and P-sites. The polypeptide is Small ribosomal subunit protein uS13 (Rhodococcus jostii (strain RHA1)).